The primary structure comprises 706 residues: MNSLFASTARGLEELLKSELEALGAHDCKIVQGGVHFQGDDRLMYQSLLWSRLASRILLPLNEFKVYSDLDLYLGVQAIDWPSIFGVDKTFAVHFSGVNDEIRNSQYGALKVKDAIVDSFTRKMDQRPTVAKQQPDIRVNVFLQRDMASVALDLSGEGLHQRGYRDLTGQAPLKENLAAAIIQRSGWQPGTPMVDPMCGSGTLLIEAAMMASDRAPGLHRGHWGFTAWNAFNEALWRELTTEAQVRARRGLLETSSRFFGSDIDRRVIEMARANARRAGVAELITFNANDISKLVNPLPEGPVGTVISNPPYGERLESEPALIALHNMFGRMMKTAFGGWRLSLFSASPELLSCLQLRADREFKAKNGPLDCVQKNYQLTANPLGAGGALVAEDYANRLRKNVKKLDKWAKQQGIECYRLYDADLPDYNVAVDRYGSKVVVQEYAPPKTIDPQKARQRLFDVINATLAVLELPSNQLVLKTRERQKGKNQYEKLAQKGEFLLVSEYNAKLWVNLTDYLDTGLFLDHRIARQMLGKMSQGKDFLNLFAYTGTASVHAGLGGARSTTTVDMSRTYLEWAEKNLRVNGLTGQQHRLIQADCLSWLSNTDEQFDVIFIDPPTFSNSKRMETTFDVQRDHLVLMKELKWLLRRKGTIMFSNNKRGFQMDLAGIAALGLEAKEITALTQSEDFARNRQIHNCWLVTHSQEEK.

Residues 43–154 (LMYQSLLWSR…RDMASVALDL (112 aa)) form the THUMP domain.

It belongs to the methyltransferase superfamily. RlmKL family.

It is found in the cytoplasm. The enzyme catalyses guanosine(2445) in 23S rRNA + S-adenosyl-L-methionine = N(2)-methylguanosine(2445) in 23S rRNA + S-adenosyl-L-homocysteine + H(+). The catalysed reaction is guanosine(2069) in 23S rRNA + S-adenosyl-L-methionine = N(2)-methylguanosine(2069) in 23S rRNA + S-adenosyl-L-homocysteine + H(+). In terms of biological role, specifically methylates the guanine in position 2445 (m2G2445) and the guanine in position 2069 (m7G2069) of 23S rRNA. This chain is Ribosomal RNA large subunit methyltransferase K/L, found in Yersinia pestis (strain Pestoides F).